The primary structure comprises 89 residues: Small ribosomal subunit protein uS15 (89 aa).

Residues 1–18 (MSLDTAEKQKLIENHQVH) show a composition bias toward basic and acidic residues. Residues 1–23 (MSLDTAEKQKLIENHQVHPTDTG) are disordered.

This sequence belongs to the universal ribosomal protein uS15 family. Part of the 30S ribosomal subunit. Forms a bridge to the 50S subunit in the 70S ribosome, contacting the 23S rRNA.

Functionally, one of the primary rRNA binding proteins, it binds directly to 16S rRNA where it helps nucleate assembly of the platform of the 30S subunit by binding and bridging several RNA helices of the 16S rRNA. Its function is as follows. Forms an intersubunit bridge (bridge B4) with the 23S rRNA of the 50S subunit in the ribosome. This chain is Small ribosomal subunit protein uS15, found in Prochlorococcus marinus (strain AS9601).